The following is a 330-amino-acid chain: Malate dehydrogenase (330 aa).

G15 to G21 contacts NAD(+). 2 residues coordinate substrate: R95 and R101. NAD(+)-binding positions include N108, Q115, and V132–N134. Residues N134 and R165 each coordinate substrate. The active-site Proton acceptor is the H190.

It belongs to the LDH/MDH superfamily. MDH type 2 family.

The catalysed reaction is (S)-malate + NAD(+) = oxaloacetate + NADH + H(+). Functionally, catalyzes the reversible oxidation of malate to oxaloacetate. The chain is Malate dehydrogenase from Corynebacterium jeikeium (strain K411).